The following is a 156-amino-acid chain: Ribonuclease P protein component (156 aa).

Residues 126-156 form a disordered region; that stretch reads GLRKLGVTPGGGRSPAPRAHSGARPRTDARS.

This sequence belongs to the RnpA family. Consists of a catalytic RNA component (M1 or rnpB) and a protein subunit.

The enzyme catalyses Endonucleolytic cleavage of RNA, removing 5'-extranucleotides from tRNA precursor.. Its function is as follows. RNaseP catalyzes the removal of the 5'-leader sequence from pre-tRNA to produce the mature 5'-terminus. It can also cleave other RNA substrates such as 4.5S RNA. The protein component plays an auxiliary but essential role in vivo by binding to the 5'-leader sequence and broadening the substrate specificity of the ribozyme. This chain is Ribonuclease P protein component, found in Nocardia farcinica (strain IFM 10152).